The chain runs to 475 residues: Coronin-2B (475 aa).

5 WD repeats span residues 80–120 (GHQG…LKRN), 130–172 (GHSR…KMID), 174–212 (HTDV…VLQE), 215–258 (CKNH…MPVT), and 260–303 (EEID…PYLT). The stretch at 431 to 470 (NELLRMFFKQQEEIRRLKEQLSQRDLLVRQLELELKNLRN) forms a coiled coil.

It belongs to the WD repeat coronin family.

Its subcellular location is the cytoplasm. The protein resides in the cytoskeleton. May play a role in the reorganization of neuronal actin structure. The polypeptide is Coronin-2B (coro2b) (Xenopus laevis (African clawed frog)).